The primary structure comprises 171 residues: Lipoprotein signal peptidase (171 aa).

3 consecutive transmembrane segments (helical) span residues 7–27 (GLLA…GLYF), 64–84 (IGRW…GLWM), and 88–108 (TSRL…GNAI). Residues aspartate 118 and aspartate 136 contribute to the active site. A helical transmembrane segment spans residues 128–148 (SWYVFNVADAAIVAGVIGLIL).

The protein belongs to the peptidase A8 family.

It localises to the cell inner membrane. It carries out the reaction Release of signal peptides from bacterial membrane prolipoproteins. Hydrolyzes -Xaa-Yaa-Zaa-|-(S,diacylglyceryl)Cys-, in which Xaa is hydrophobic (preferably Leu), and Yaa (Ala or Ser) and Zaa (Gly or Ala) have small, neutral side chains.. It functions in the pathway protein modification; lipoprotein biosynthesis (signal peptide cleavage). Functionally, this protein specifically catalyzes the removal of signal peptides from prolipoproteins. The chain is Lipoprotein signal peptidase from Methylobacterium radiotolerans (strain ATCC 27329 / DSM 1819 / JCM 2831 / NBRC 15690 / NCIMB 10815 / 0-1).